Reading from the N-terminus, the 439-residue chain is Chitinase-like protein Idgf1 (439 aa).

Positions 1–20 (MRFQLCYLLGLLSVTSLSHA) are cleaved as a signal peptide. Residues 22 to 439 (SNLICYYDST…IVRSIKYFMG (418 aa)) form the GH18 domain. An intrachain disulfide couples C26 to C53. 3 N-linked (GlcNAc...) asparagine glycosylation sites follow: N122, N218, and N346. A disulfide bridge connects residues C340 and C423.

Belongs to the glycosyl hydrolase 18 family. IDGF subfamily. Post-translationally, glycosylated.

It is found in the secreted. Its function is as follows. Cooperates with insulin-like peptides to stimulate the proliferation, polarization and motility of imaginal disk cells. May act by stabilizing the binding of insulin-like peptides to its receptor through a simultaneous interaction with both molecules to form a multiprotein signaling complex. This chain is Chitinase-like protein Idgf1 (Idgf1), found in Drosophila yakuba (Fruit fly).